Consider the following 425-residue polypeptide: CDP-diacylglycerol--serine O-phosphatidyltransferase 1 (425 aa).

Over residues 1–16 (MEPNGYRKERRKEQHL) the composition is skewed to basic and acidic residues. The disordered stretch occupies residues 1-23 (MEPNGYRKERRKEQHLGRMNGGG). 9 helical membrane passes run 42 to 62 (TISL…ALDP), 79 to 99 (WAMI…TVLI), 105 to 125 (IWRL…FLLF), 197 to 217 (PLLW…RHML), 227 to 247 (SIVL…MYTV), 296 to 316 (FIQV…TFFL), 321 to 341 (WIPP…LIAI), 361 to 381 (GAFC…CIKF), and 390 to 410 (MPLW…AFLL).

Belongs to the CDP-alcohol phosphatidyltransferase class-I family. In terms of tissue distribution, expressed in trichomes, leaf veins and root vasculature.

It is found in the endoplasmic reticulum membrane. It localises to the nucleus envelope. The enzyme catalyses a CDP-1,2-diacyl-sn-glycerol + L-serine = a 1,2-diacyl-sn-glycero-3-phospho-L-serine + CMP + H(+). Its pathway is phospholipid metabolism; phosphatidylethanolamine biosynthesis; phosphatidylethanolamine from CDP-diacylglycerol: step 1/2. Its function is as follows. Catalyzes a base-exchange reaction in which the polar head group of phosphatidylethanolamine (PE) or phosphatidylcholine (PC) is replaced by L-serine. Is essential for phosphatidylserine (PS) biosynthesis and PE seems to be the most plausible substrate. Plays an important role in microspore maturation. The chain is CDP-diacylglycerol--serine O-phosphatidyltransferase 1 (PSS1) from Arabidopsis thaliana (Mouse-ear cress).